Consider the following 522-residue polypeptide: 2-isopropylmalate synthase (522 aa).

Residues 5–267 enclose the Pyruvate carboxyltransferase domain; that stretch reads VIIFDTTLRD…HTRINHQEIY (263 aa). Positions 14, 202, 204, and 238 each coordinate Mn(2+). Residues 392–522 are regulatory domain; that stretch reads RLDTFNVQSG…SQVKDQKETV (131 aa).

The protein belongs to the alpha-IPM synthase/homocitrate synthase family. LeuA type 1 subfamily. Homodimer. Mn(2+) is required as a cofactor.

The protein resides in the cytoplasm. The enzyme catalyses 3-methyl-2-oxobutanoate + acetyl-CoA + H2O = (2S)-2-isopropylmalate + CoA + H(+). Its pathway is amino-acid biosynthesis; L-leucine biosynthesis; L-leucine from 3-methyl-2-oxobutanoate: step 1/4. Functionally, catalyzes the condensation of the acetyl group of acetyl-CoA with 3-methyl-2-oxobutanoate (2-ketoisovalerate) to form 3-carboxy-3-hydroxy-4-methylpentanoate (2-isopropylmalate). This is 2-isopropylmalate synthase from Erwinia tasmaniensis (strain DSM 17950 / CFBP 7177 / CIP 109463 / NCPPB 4357 / Et1/99).